Here is a 101-residue protein sequence, read N- to C-terminus: Anti-lipopolysaccharide factor (101 aa).

The cysteines at positions 31 and 52 are disulfide-linked.

In terms of biological role, binds tightly to LPS and thus specifically inhibits the LPS-mediated activation of the hemolymph coagulation. It has a strong antibacterial effect especially on the growth of Gram-negative bacteria. The polypeptide is Anti-lipopolysaccharide factor (Limulus polyphemus (Atlantic horseshoe crab)).